We begin with the raw amino-acid sequence, 520 residues long: Probable glycine dehydrogenase (decarboxylating) subunit 2 (520 aa).

The interval 1 to 29 is disordered; that stretch reads MWRQSRWNEPLITEMSRRGRRGALPPRPD. Position 279 is an N6-(pyridoxal phosphate)lysine (Lys-279).

This sequence belongs to the GcvP family. C-terminal subunit subfamily. In terms of assembly, the glycine cleavage system is composed of four proteins: P, T, L and H. In this organism, the P 'protein' is a heterodimer of two subunits. Pyridoxal 5'-phosphate is required as a cofactor.

It catalyses the reaction N(6)-[(R)-lipoyl]-L-lysyl-[glycine-cleavage complex H protein] + glycine + H(+) = N(6)-[(R)-S(8)-aminomethyldihydrolipoyl]-L-lysyl-[glycine-cleavage complex H protein] + CO2. Functionally, the glycine cleavage system catalyzes the degradation of glycine. The P protein binds the alpha-amino group of glycine through its pyridoxal phosphate cofactor; CO(2) is released and the remaining methylamine moiety is then transferred to the lipoamide cofactor of the H protein. The chain is Probable glycine dehydrogenase (decarboxylating) subunit 2 from Aeropyrum pernix (strain ATCC 700893 / DSM 11879 / JCM 9820 / NBRC 100138 / K1).